An 849-amino-acid polypeptide reads, in one-letter code: uncharacterized protein (849 aa).

2 helical membrane passes run 587–607 (VALG…LGLF) and 620–640 (AGIL…TGDW).

Its subcellular location is the cell membrane. This is an uncharacterized protein from Methanocaldococcus jannaschii (strain ATCC 43067 / DSM 2661 / JAL-1 / JCM 10045 / NBRC 100440) (Methanococcus jannaschii).